The chain runs to 514 residues: L-carnitine/gamma-butyrobetaine antiporter (514 aa).

Residues 1–11 (MSKDNKKAGIE) are Cytoplasmic-facing. A helical membrane pass occupies residues 12 to 30 (PKVFFPPLIIVGILCWLTV). Topologically, residues 31 to 42 (RDLDASNEVINA) are periplasmic. A helical transmembrane segment spans residues 43–68 (VFSYVTNVWGWAFEWYMVIMFGGWFW). Residues 69 to 91 (LVFGRYAKKRLGDEKPEFSTASW) lie on the Cytoplasmic side of the membrane. A helical membrane pass occupies residues 92-112 (IFMMFASCTSAAVLFWGSIEI). At 113 to 131 (YYYISSPPFGMEGYSAPAK) the chain is on the periplasmic side. A helical membrane pass occupies residues 132–154 (EIGLAYSLFHWGPLPWATYSFLS). The Cytoplasmic segment spans residues 155-185 (VAFAYFFFVRKMEVIRPSSTLTPLVGEKHVN). A helical transmembrane segment spans residues 186–216 (GLFGTVVDNFYLVALILAMGTSLGLATPLVT). Over 217 to 230 (ECIQYLFGIPHTLQ) the chain is Periplasmic. A helical membrane pass occupies residues 231–249 (LDAIIISCWILLNAICVAF). Over 250–251 (GL) the chain is Cytoplasmic. A helical membrane pass occupies residues 252–277 (QKGVKIASDVRTYLSFLMLGWVFIVG). Residues 278–311 (GASFIVNYFTDSVGTLLMYMPRMLFYTDPIGKGG) are Periplasmic-facing. The chain crosses the membrane as a helical span at residues 312–335 (FPQAWTVFYWAWWVIYAIQMSIFL). Residues 336-347 (ARISKGRTVREL) lie on the Cytoplasmic side of the membrane. The helical transmembrane segment at 348 to 369 (CLGMVSGLTAGTWLIWTILGGN) threads the bilayer. Residues 370-404 (TLQLIDQNILNIPQLIDQYGVPRAIIETWAALPLS) are Periplasmic-facing. The helical transmembrane segment at 405–434 (TATMWGFFILCFIATVTLINACSYTLAMST) threads the bilayer. The Cytoplasmic segment spans residues 435–445 (CRSMKEGAEPP). A helical transmembrane segment spans residues 446–464 (LLVRIGWSVLVGIIGIILL). Over 465–468 (ALGG) the chain is Periplasmic. A helical membrane pass occupies residues 469–492 (LKPIQTAIIAGGCPLFFVNIMVTL). Topologically, residues 493–514 (SFIKDAKVHWKDCSPYTQKMTH) are cytoplasmic.

This sequence belongs to the BCCT transporter (TC 2.A.15) family. CaiT subfamily. As to quaternary structure, homotrimer.

It localises to the cell inner membrane. It carries out the reaction 4-(trimethylamino)butanoate(in) + (R)-carnitine(out) = 4-(trimethylamino)butanoate(out) + (R)-carnitine(in). Its pathway is amine and polyamine metabolism; carnitine metabolism. In terms of biological role, catalyzes the exchange of L-carnitine for gamma-butyrobetaine. This is L-carnitine/gamma-butyrobetaine antiporter from Proteus mirabilis (strain HI4320).